The chain runs to 642 residues: MEPYAILYVTQEIEYLLKDSFLPKWELDGIKDLNTLWLERGRMACDTYAIGKIEQWSVRQLRAHRFLFISTKRKIRLKDCTISPDIFILKKELKEYDMKRFETLIGRRRVTLRKSFGNMLRAYAFQHVTVLHGSEAETLSYADPKRHVVKGQPKAAPMYDHPDRWWRDVDDGPTDKKLVSMLDYIIYSADEVYYVGCGDLKTLEQFASRDRKRFDRIKWICIDPIAPETSYANVKVVREKVVSARDLKHYLMRDEVERLLIWDVSADGLKGTIEWEKQRFKEDRNGENIAEALCADFALALIKHRIPEESDEYICRSSWLIPQPGAPITMYELRNLMRLDGYSHVERKHIPRAYARKIDAEVARRLVEEYHGEDVGRLLKRSLYEDIHIERADGLTDGDERTRADLFYLTNMRNVAFMHDVYRVVEKSFISTLWVSNRQNFTYDDVPVNRNFITLRFSKKNRRVLDGNGAILFLMWQHPKDFPKTMNYDPSWAENYAVIFYHALTSPVPDLSLCRFIGLRLMSSTLRINSDRAHQVTDILKKLGLDVSGHLFICLMSNSYVADLDWWFRMILEWSVKDREGKLAALSEAKAELIEWRDEKADEPWHIKNDLLAALFEFIYFAKHFDINERYVESWIQYLRNA.

This sequence belongs to the orbivirus VP4 family.

It is found in the virion. Functionally, the VP4 protein is one of the five proteins (with VP1, VP3, VP6 and VP7) which form the inner capsid of the virus. The chain is Core protein VP4 (Segment-4) from African horse sickness virus (AHSV).